The chain runs to 710 residues: Forkhead box protein P2 (710 aa).

Over residues 1-28 the composition is skewed to polar residues; that stretch reads MMQESATETISNSSMNQNGMSTLSSQLD. 2 disordered regions span residues 1–44 and 272–334; these read MMQE…SSEV and HSQE…TGAS. Residues 273 to 283 show a composition bias toward basic and acidic residues; that stretch reads SQEDNGIKHGG. A compositionally biased stretch (low complexity) spans 287-300; the sequence is TTNNSSSTTSSTTS. Residues 310–319 show a composition bias toward polar residues; it reads SIVNGQSSVL. Basic and acidic residues predominate over residues 321-332; the sequence is ARRDSSSHEETG. The segment at 343–366 adopts a C2H2-type zinc-finger fold; that stretch reads CKWPGCESICEDFGQFLKHLNNEH. A leucine-zipper region spans residues 383–404; that stretch reads VQQLEIQLSKERERLQAMMTHL. The interval 417–421 is CTBP1-binding; sequence PLNLV. The span at 433-454 shows a compositional bias: low complexity; sequence TSPQSLPQTPTTPTAPVTPITQ. A disordered region spans residues 433 to 460; the sequence is TSPQSLPQTPTTPTAPVTPITQGPSVIT. The segment at residues 499–589 is a DNA-binding region (fork-head); sequence RPPFTYATLI…SQKITGSPTL (91 aa). Disordered regions lie at residues 644–663 and 673–710; these read LDHI…QPHI and VIAE…EDLE. A compositionally biased stretch (acidic residues) spans 694–710; that stretch reads LEDDREIEEEPLSEDLE.

As to quaternary structure, forms homodimers and heterodimers with FOXP1 and FOXP4. Dimerization is required for DNA-binding. Interacts with CTBP1. Interacts with FOXP1. Interacts with TBR1. Interacts with ZMYM2.

Its subcellular location is the nucleus. Transcriptional repressor that may play a role in the specification and differentiation of lung epithelium. May also play a role in developing neural, gastrointestinal and cardiovascular tissues. Can act with CTBP1 to synergistically repress transcription but CTPBP1 is not essential. Plays a role in synapse formation by regulating SRPX2 levels. The sequence is that of Forkhead box protein P2 (Foxp2) from Rattus norvegicus (Rat).